The following is a 591-amino-acid chain: V-type ATP synthase alpha chain (591 aa).

ATP is bound at residue 233–240; the sequence is GPFGAGKT.

Belongs to the ATPase alpha/beta chains family.

It carries out the reaction ATP + H2O + 4 H(+)(in) = ADP + phosphate + 5 H(+)(out). Functionally, produces ATP from ADP in the presence of a proton gradient across the membrane. The V-type alpha chain is a catalytic subunit. The chain is V-type ATP synthase alpha chain from Streptococcus pyogenes serotype M18 (strain MGAS8232).